We begin with the raw amino-acid sequence, 236 residues long: Phosphoribosylaminoimidazole-succinocarboxamide synthase (236 aa).

This sequence belongs to the SAICAR synthetase family.

The enzyme catalyses 5-amino-1-(5-phospho-D-ribosyl)imidazole-4-carboxylate + L-aspartate + ATP = (2S)-2-[5-amino-1-(5-phospho-beta-D-ribosyl)imidazole-4-carboxamido]succinate + ADP + phosphate + 2 H(+). It functions in the pathway purine metabolism; IMP biosynthesis via de novo pathway; 5-amino-1-(5-phospho-D-ribosyl)imidazole-4-carboxamide from 5-amino-1-(5-phospho-D-ribosyl)imidazole-4-carboxylate: step 1/2. This chain is Phosphoribosylaminoimidazole-succinocarboxamide synthase, found in Coprothermobacter proteolyticus (strain ATCC 35245 / DSM 5265 / OCM 4 / BT).